Here is a 1002-residue protein sequence, read N- to C-terminus: Lon protease homolog, mitochondrial (1002 aa).

One can recognise a Lon N-terminal domain in the interval 102 to 313; sequence VIALPLPHRP…LTLELVKKEM (212 aa). 468-475 serves as a coordination point for ATP; the sequence is GPPGVGKT. Residues 811–995 enclose the Lon proteolytic domain; sequence QTPVGVVMGL…NEIFDIAFQS (185 aa). Active-site residues include Ser901 and Lys944.

This sequence belongs to the peptidase S16 family. As to quaternary structure, homohexamer or homoheptamer. Organized in a ring with a central cavity.

Its subcellular location is the mitochondrion matrix. The enzyme catalyses Hydrolysis of proteins in presence of ATP.. Functionally, ATP-dependent serine protease that mediates the selective degradation of misfolded, unassembled or oxidatively damaged polypeptides as well as certain short-lived regulatory proteins in the mitochondrial matrix. May also have a chaperone function in the assembly of inner membrane protein complexes. Participates in the regulation of mitochondrial gene expression and in the maintenance of the integrity of the mitochondrial genome. Binds to mitochondrial DNA in a site-specific manner. The protein is Lon protease homolog, mitochondrial of Oryza sativa subsp. indica (Rice).